Reading from the N-terminus, the 221-residue chain is GTP cyclohydrolase III (221 aa).

It belongs to the archaeal-type GTP cyclohydrolase family.

The catalysed reaction is GTP + 3 H2O = 2-amino-5-formylamino-6-(5-phospho-D-ribosylamino)pyrimidin-4(3H)-one + 2 phosphate + 2 H(+). Its function is as follows. Catalyzes the formation of 2-amino-5-formylamino-6-ribofuranosylamino-4(3H)-pyrimidinone ribonucleotide monophosphate and inorganic phosphate from GTP. Also has an independent pyrophosphate phosphohydrolase activity. This is GTP cyclohydrolase III from Pyrobaculum islandicum (strain DSM 4184 / JCM 9189 / GEO3).